A 262-amino-acid chain; its full sequence is uncharacterized protein (262 aa).

This is an uncharacterized protein from Acanthamoeba polyphaga mimivirus (APMV).